A 496-amino-acid polypeptide reads, in one-letter code: MQGNLTALLITAIIVLTVVCIGFLAGRDKSSRTSVEEWSVGGRRFGGLLVWFLVGADLYTAYTFLGLTSTAFTGGSVAFFAIPYSVLAYFIAYFFLPKLWKVAKIHKLTTLADYARERFNSKLLASLVAIVGVLMLIPYICLQLSGIQDTLQVAGTGYINVKFVVIISFILVALYTFFSGIKGPTYTAIIKDILVWVIMLFMVVSLPLIHFNGWTPMIDTLVKEAPQMLTIPSEGPKGIPWFITASIVSALALFMWAHAATGVFTAKSADAVRKNSMFLPLYNIVLILVIFLGFIAFLVLPEDTNPRLALLHLIQTSYGGVAQGFAYATIALASLIPCSIMAIGASNLFANNLYRDLIHPNVSQSKLTLVTRSMVFVVIGLALLFGMLFPTALVTLQLLGVSGMVQIFPAIAVSLFWKNQTKEATVIGLLAGLAVTFIVYITQSAHGIYEGFWGLAANMIAVVILNPLFVKNAGSNPVIEGLFGKKQDANPNQKGA.

The next 13 helical transmembrane spans lie at 5–25 (LTALLITAIIVLTVVCIGFLA), 45–65 (FGGLLVWFLVGADLYTAYTFL), 77–97 (VAFFAIPYSVLAYFIAYFFLP), 127–147 (LVAIVGVLMLIPYICLQLSGI), 161–181 (VKFVVIISFILVALYTFFSGI), 193–213 (ILVWVIMLFMVVSLPLIHFNG), 239–259 (IPWFITASIVSALALFMWAHA), 278–298 (FLPLYNIVLILVIFLGFIAFL), 325–345 (FAYATIALASLIPCSIMAIGA), 374–394 (MVFVVIGLALLFGMLFPTALV), 396–416 (LQLLGVSGMVQIFPAIAVSLF), 424–444 (ATVIGLLAGLAVTFIVYITQS), and 450–470 (EGFWGLAANMIAVVILNPLFV).

The protein belongs to the sodium:solute symporter (SSF) (TC 2.A.21) family.

Its subcellular location is the cell membrane. This is an uncharacterized protein from Bacillus subtilis (strain 168).